The chain runs to 217 residues: Growth hormone variant (217 aa).

Residues 1-26 (MAAGSRTSLLLAFGLLCLSWLQEGSA) form the signal peptide. Disulfide bonds link Cys79/Cys191 and Cys208/Cys215. Ser132 is subject to Phosphoserine. Asn166 is a glycosylation site (N-linked (GlcNAc...) asparagine). Ser176 bears the Phosphoserine mark.

The protein belongs to the somatotropin/prolactin family. As to quaternary structure, monomer, dimer, trimer, tetramer and pentamer, disulfide-linked or non-covalently associated, in homomeric and heteromeric combinations. Can also form a complex either with GHBP or with the alpha2-macroglobulin complex. In terms of tissue distribution, expressed in the placenta.

It localises to the secreted. Functionally, plays an important role in growth control. Its major role in stimulating body growth is to stimulate the liver and other tissues to secrete IGF1. It stimulates both the differentiation and proliferation of myoblasts. It also stimulates amino acid uptake and protein synthesis in muscle and other tissues. The polypeptide is Growth hormone variant (GH2) (Homo sapiens (Human)).